Consider the following 705-residue polypeptide: ATP-dependent DNA helicase Q-like 2 (705 aa).

Residues 1-30 adopt a coiled-coil conformation; that stretch reads MESEAIQEDLQNLDVELKDVQGQISALIEH. Residues 98-273 enclose the Helicase ATP-binding domain; that stretch reads INAIMTGRDV…IEMLHIPKCV (176 aa). Residue 111 to 118 coordinates ATP; it reads MAAGGGKS. Positions 217–220 match the DEAH box motif; that stretch reads DEAH. One can recognise a Helicase C-terminal domain in the interval 298-450; it reads VVDEIAEFIR…DIVRYCQSKT (153 aa). Residues 591–670 enclose the HRDC domain; the sequence is SITFSGLELK…MRHEAVSEQL (80 aa). The tract at residues 668–705 is disordered; sequence EQLVEDPTKEETCKSRLRKRAKTQKDVVLVESSGEEEA.

It belongs to the helicase family. RecQ subfamily. As to quaternary structure, interacts with WEX. The cofactor is Mg(2+). Mn(2+) serves as cofactor. Expressed in shoots and flowers. Expressed in young leaves, inflorescences, roots, shoot apical meristem, young siliques, and mature green siliques.

The protein localises to the nucleus. The catalysed reaction is Couples ATP hydrolysis with the unwinding of duplex DNA by translocating in the 3'-5' direction.. It catalyses the reaction ATP + H2O = ADP + phosphate + H(+). Functionally, 3'-5' DNA helicase that may play a role in the repair of DNA. Its DNA unwinding activity in vitro is dependent on magnesium, and ATP or dATP. Can use GTP/dGTP, CTP/dCTP or UTP/dUTP as nucleotide cofactors. Catalyzes Holliday junction branch migration and replication fork regression. Disrupts D-loop structures. Unwinds G-quadruplex DNA, found in telomeric DNA. The sequence is that of ATP-dependent DNA helicase Q-like 2 from Arabidopsis thaliana (Mouse-ear cress).